The primary structure comprises 260 residues: MRTDTDKLIIAGREFNSRLMVGTGKYADFQQMVKAIEVSGAEIITVAVRRVNISDRNKESLLDHIDTKKYTLLPNTAGCYTADDAIRTCRLAREAGLSDFVKLEVLGDEKTLFPDNEELLKAAKVLIKEGFTVLPYTTDDPIVCKKLEDIGCAAVMPLGAPIGSGLGIRNPYNIRIILDTVKVPVIVDAGVGTASDAAIAMELGCHGVLMNTGIAGAKDPIAMAEAMNLAVRAGRLAYRAGRIPKKLYATASSPVEGTIE.

The active-site Schiff-base intermediate with DXP is the K102. 1-deoxy-D-xylulose 5-phosphate-binding positions include G163, 189–190, and 211–212; these read AG and NT.

Belongs to the ThiG family. Homotetramer. Forms heterodimers with either ThiH or ThiS.

Its subcellular location is the cytoplasm. It carries out the reaction [ThiS sulfur-carrier protein]-C-terminal-Gly-aminoethanethioate + 2-iminoacetate + 1-deoxy-D-xylulose 5-phosphate = [ThiS sulfur-carrier protein]-C-terminal Gly-Gly + 2-[(2R,5Z)-2-carboxy-4-methylthiazol-5(2H)-ylidene]ethyl phosphate + 2 H2O + H(+). Its pathway is cofactor biosynthesis; thiamine diphosphate biosynthesis. In terms of biological role, catalyzes the rearrangement of 1-deoxy-D-xylulose 5-phosphate (DXP) to produce the thiazole phosphate moiety of thiamine. Sulfur is provided by the thiocarboxylate moiety of the carrier protein ThiS. In vitro, sulfur can be provided by H(2)S. The protein is Thiazole synthase of Geotalea uraniireducens (strain Rf4) (Geobacter uraniireducens).